The primary structure comprises 452 residues: Bifunctional protein GlmU (452 aa).

Residues 1–232 (MTTNAPGAVI…EADMQGVNSR (232 aa)) form a pyrophosphorylase region. Residues 11 to 14 (LAAG), Lys-25, Gln-78, and 83 to 84 (GT) contribute to the UDP-N-acetyl-alpha-D-glucosamine site. Asp-108 contributes to the Mg(2+) binding site. Residues Gly-144, Glu-158, and Asn-230 each contribute to the UDP-N-acetyl-alpha-D-glucosamine site. Asn-230 is a Mg(2+) binding site. The segment at 233–253 (ADLAAAEATMQQRLRMAAMAG) is linker. The segment at 254 to 452 (GVTMLDPSSV…HKDKKKASGE (199 aa)) is N-acetyltransferase. Arg-319 and Lys-337 together coordinate UDP-N-acetyl-alpha-D-glucosamine. Catalysis depends on His-349, which acts as the Proton acceptor. UDP-N-acetyl-alpha-D-glucosamine contacts are provided by Tyr-352 and Asn-363. Residues Ala-366, 372-373 (NY), Ser-391, Ser-409, and Arg-426 contribute to the acetyl-CoA site.

It in the N-terminal section; belongs to the N-acetylglucosamine-1-phosphate uridyltransferase family. The protein in the C-terminal section; belongs to the transferase hexapeptide repeat family. In terms of assembly, homotrimer. Requires Mg(2+) as cofactor.

The protein resides in the cytoplasm. The enzyme catalyses alpha-D-glucosamine 1-phosphate + acetyl-CoA = N-acetyl-alpha-D-glucosamine 1-phosphate + CoA + H(+). The catalysed reaction is N-acetyl-alpha-D-glucosamine 1-phosphate + UTP + H(+) = UDP-N-acetyl-alpha-D-glucosamine + diphosphate. It participates in nucleotide-sugar biosynthesis; UDP-N-acetyl-alpha-D-glucosamine biosynthesis; N-acetyl-alpha-D-glucosamine 1-phosphate from alpha-D-glucosamine 6-phosphate (route II): step 2/2. Its pathway is nucleotide-sugar biosynthesis; UDP-N-acetyl-alpha-D-glucosamine biosynthesis; UDP-N-acetyl-alpha-D-glucosamine from N-acetyl-alpha-D-glucosamine 1-phosphate: step 1/1. It functions in the pathway bacterial outer membrane biogenesis; LPS lipid A biosynthesis. Its function is as follows. Catalyzes the last two sequential reactions in the de novo biosynthetic pathway for UDP-N-acetylglucosamine (UDP-GlcNAc). The C-terminal domain catalyzes the transfer of acetyl group from acetyl coenzyme A to glucosamine-1-phosphate (GlcN-1-P) to produce N-acetylglucosamine-1-phosphate (GlcNAc-1-P), which is converted into UDP-GlcNAc by the transfer of uridine 5-monophosphate (from uridine 5-triphosphate), a reaction catalyzed by the N-terminal domain. The chain is Bifunctional protein GlmU from Parvibaculum lavamentivorans (strain DS-1 / DSM 13023 / NCIMB 13966).